The sequence spans 327 residues: Glycolipid sulfotransferase BCG_1434 (327 aa).

40–45 (KSGLTW) lines the 3'-phosphoadenylyl sulfate pocket. The active-site Proton acceptor is the H97. A 3'-phosphoadenylyl sulfate-binding site is contributed by 116–124 (RDPRDAAVS).

It belongs to the sulfotransferase 1 family.

Functionally, involved in the synthesis of cell wall sulfolipids. The protein is Glycolipid sulfotransferase BCG_1434 of Mycobacterium bovis (strain BCG / Pasteur 1173P2).